The chain runs to 354 residues: Nicotinate-nucleotide--dimethylbenzimidazole phosphoribosyltransferase (354 aa).

Glutamate 313 acts as the Proton acceptor in catalysis.

Belongs to the CobT family.

It catalyses the reaction 5,6-dimethylbenzimidazole + nicotinate beta-D-ribonucleotide = alpha-ribazole 5'-phosphate + nicotinate + H(+). It functions in the pathway nucleoside biosynthesis; alpha-ribazole biosynthesis; alpha-ribazole from 5,6-dimethylbenzimidazole: step 1/2. Functionally, catalyzes the synthesis of alpha-ribazole-5'-phosphate from nicotinate mononucleotide (NAMN) and 5,6-dimethylbenzimidazole (DMB). This Ralstonia nicotianae (strain ATCC BAA-1114 / GMI1000) (Ralstonia solanacearum) protein is Nicotinate-nucleotide--dimethylbenzimidazole phosphoribosyltransferase.